The sequence spans 449 residues: UDP-N-acetylmuramoylalanine--D-glutamate ligase (449 aa).

Residue 118–124 (GTNGKTT) coordinates ATP.

The protein belongs to the MurCDEF family.

It is found in the cytoplasm. The catalysed reaction is UDP-N-acetyl-alpha-D-muramoyl-L-alanine + D-glutamate + ATP = UDP-N-acetyl-alpha-D-muramoyl-L-alanyl-D-glutamate + ADP + phosphate + H(+). Its pathway is cell wall biogenesis; peptidoglycan biosynthesis. Its function is as follows. Cell wall formation. Catalyzes the addition of glutamate to the nucleotide precursor UDP-N-acetylmuramoyl-L-alanine (UMA). This chain is UDP-N-acetylmuramoylalanine--D-glutamate ligase, found in Staphylococcus saprophyticus subsp. saprophyticus (strain ATCC 15305 / DSM 20229 / NCIMB 8711 / NCTC 7292 / S-41).